The chain runs to 110 residues: Class I hydrophobin Po.HYD (110 aa).

Residues Met1–Thr27 form the signal peptide. 4 cysteine pairs are disulfide-bonded: Cys35/Cys91, Cys42/Cys85, Cys43/Cys75, and Cys92/Cys105.

This sequence belongs to the fungal hydrophobin family. Self-assembles to form functional amyloid fibrils called rodlets. Self-assembly into fibrillar rodlets occurs spontaneously at hydrophobic:hydrophilic interfaces and the rodlets further associate laterally to form amphipathic monolayers.

Its subcellular location is the secreted. It is found in the cell wall. Aerial growth, conidiation, and dispersal of filamentous fungi in the environment rely upon a capability of their secreting small amphipathic proteins called hydrophobins (HPBs) with low sequence identity. Class I can self-assemble into an outermost layer of rodlet bundles on aerial cell surfaces, conferring cellular hydrophobicity that supports fungal growth, development and dispersal; whereas Class II form highly ordered films at water-air interfaces through intermolecular interactions but contribute nothing to the rodlet structure. The chain is Class I hydrophobin Po.HYD from Pleurotus ostreatus (Oyster mushroom).